The primary structure comprises 380 residues: Outer mitochondrial transmembrane helix translocase (380 aa).

The Mitochondrial intermembrane segment spans residues 1–18; sequence MLSDIPRDALLRPLTRNE. The chain crosses the membrane as a helical span at residues 19 to 37; the sequence is VVGMLVRLTVFGAATYYSI. Residues 38–380 lie on the Cytoplasmic side of the membrane; the sequence is KWVVDALDPT…PANLREVPLD (343 aa). Position 136–143 (136–143) interacts with ATP; that stretch reads GPPGCGKT.

Belongs to the AAA ATPase family. MSP1 subfamily.

The protein localises to the mitochondrion outer membrane. The protein resides in the peroxisome membrane. It localises to the postsynaptic cell membrane. It carries out the reaction [protein]-with a C-terminal TM segment(out) + ATP + H2O = [protein]-with a C-terminal TM segment(in) + ADP + phosphate + H(+). Functionally, outer mitochondrial translocase required to remove mislocalized tail-anchored transmembrane proteins on mitochondria. Specifically recognizes and binds tail-anchored transmembrane proteins: acts as a dislocase that mediates the ATP-dependent extraction of mistargeted tail-anchored transmembrane proteins from the mitochondrion outer membrane. Also plays a critical role in regulating the surface expression of AMPA receptors (AMPAR), thereby regulating synaptic plasticity and learning and memory. This is Outer mitochondrial transmembrane helix translocase from Danio rerio (Zebrafish).